Reading from the N-terminus, the 370-residue chain is NAD-dependent histone deacetylase HST4 (370 aa).

The interval 1 to 27 (MKQKFVLPITPPSTAEKKPQTENRCNE) is disordered. Basic and acidic residues predominate over residues 15–27 (AEKKPQTENRCNE). The region spanning 75 to 370 (RHHMDRDAGF…GDCQHVTSLL (296 aa)) is the Deacetylase sirtuin-type domain. Residues 100–119 (GAGISVAAGIPDFRSSEGIF) and 184–187 (QNID) each bind NAD(+). His-213 serves as the catalytic Proton acceptor. Zn(2+) is bound by residues Cys-221, Cys-224, Cys-251, and Cys-254. NAD(+)-binding positions include 310-312 (GTS), 340-342 (NTS), and Cys-363.

This sequence belongs to the sirtuin family. Class I subfamily. It depends on Zn(2+) as a cofactor.

It localises to the nucleus. It catalyses the reaction N(6)-acetyl-L-lysyl-[protein] + NAD(+) + H2O = 2''-O-acetyl-ADP-D-ribose + nicotinamide + L-lysyl-[protein]. NAD-dependent histone deacetylase, which contributes together with HST3 to histone H3 'Lys-56' deacetylation, regulation of telomeric silencing, proper cell cycle progression, DNA damage control, DNA recombination, and genomic maintenance. This is NAD-dependent histone deacetylase HST4 (HST4) from Saccharomyces cerevisiae (strain ATCC 204508 / S288c) (Baker's yeast).